The chain runs to 515 residues: 2,3-bisphosphoglycerate-independent phosphoglycerate mutase (515 aa).

Mn(2+)-binding residues include Asp-14 and Ser-63. The active site involves Ser-63. Residues His-124, 154–155, Arg-186, Arg-192, 259–262, and Lys-334 contribute to the substrate site; these read RD and RADR. Mn(2+) is bound by residues Asp-401, His-405, Asp-442, His-443, and His-460.

It belongs to the BPG-independent phosphoglycerate mutase family. Mg(2+) is required as a cofactor. Requires Mn(2+) as cofactor.

It catalyses the reaction (2R)-2-phosphoglycerate = (2R)-3-phosphoglycerate. It participates in carbohydrate degradation; glycolysis; pyruvate from D-glyceraldehyde 3-phosphate: step 3/5. Activity is not affected by 2,3-bisphosphoglycerate. In terms of biological role, catalyzes the interconversion of 2-phosphoglycerate and 3-phosphoglycerate. The polypeptide is 2,3-bisphosphoglycerate-independent phosphoglycerate mutase (Onchocerca volvulus).